Reading from the N-terminus, the 180-residue chain is MLEQDIQKILYSENDIIRKTKKLGEQLTKDYQEKNPLMIGVLKGSVPFMAELMKHIDTHVEIDFMVVSSYHGGTSSSGEVKILKDVDTNIEGRDIIIVEDIIDTGRTLKYLRDMFKYRKANTIKIATLFDKPEGRVVKIEADYVCYNIPNEFIVGFGLDYAENYRNLPYVGVLKEEVYSK.

Lys-43 and Gly-44 together coordinate diphosphate. Residues Glu-99 and Asp-100 each coordinate Mg(2+). Asp-103 (proton acceptor) is an active-site residue. Residues Lys-131, Phe-152–Ile-153, and Asp-159 contribute to the GMP site. Diphosphate is bound at residue Arg-165.

This sequence belongs to the purine/pyrimidine phosphoribosyltransferase family. Mg(2+) serves as cofactor.

Its subcellular location is the cytoplasm. The enzyme catalyses IMP + diphosphate = hypoxanthine + 5-phospho-alpha-D-ribose 1-diphosphate. It catalyses the reaction GMP + diphosphate = guanine + 5-phospho-alpha-D-ribose 1-diphosphate. The protein operates within purine metabolism; IMP biosynthesis via salvage pathway; IMP from hypoxanthine: step 1/1. It functions in the pathway purine metabolism; GMP biosynthesis via salvage pathway; GMP from guanine: step 1/1. Purine salvage pathway enzyme that catalyzes the transfer of the ribosyl-5-phosphate group from 5-phospho-alpha-D-ribose 1-diphosphate (PRPP) to the N9 position of the 6-oxopurines hypoxanthine and guanine to form the corresponding ribonucleotides IMP (inosine 5'-monophosphate) and GMP (guanosine 5'-monophosphate), with the release of PPi. In Streptococcus pyogenes serotype M3 (strain ATCC BAA-595 / MGAS315), this protein is Hypoxanthine-guanine phosphoribosyltransferase (hpt).